The primary structure comprises 545 residues: Glucose-6-phosphate isomerase (545 aa).

The Proton donor role is filled by glutamate 351. Catalysis depends on residues histidine 382 and lysine 510.

Belongs to the GPI family.

The protein resides in the cytoplasm. It carries out the reaction alpha-D-glucose 6-phosphate = beta-D-fructose 6-phosphate. Its pathway is carbohydrate biosynthesis; gluconeogenesis. It participates in carbohydrate degradation; glycolysis; D-glyceraldehyde 3-phosphate and glycerone phosphate from D-glucose: step 2/4. In terms of biological role, catalyzes the reversible isomerization of glucose-6-phosphate to fructose-6-phosphate. The chain is Glucose-6-phosphate isomerase from Shewanella pealeana (strain ATCC 700345 / ANG-SQ1).